We begin with the raw amino-acid sequence, 711 residues long: Catalase HPII (711 aa).

Residues 1-10 (MPSKKTDAPK) are compositionally biased toward basic and acidic residues. Positions 1–27 (MPSKKTDAPKQSEAAGTQTPDRANTNA) are disordered. Polar residues predominate over residues 14–27 (AAGTQTPDRANTNA). Catalysis depends on residues H92 and N165. Y379 provides a ligand contact to heme.

It belongs to the catalase family. HPII subfamily. Requires heme as cofactor.

The protein localises to the cytoplasm. The enzyme catalyses 2 H2O2 = O2 + 2 H2O. In terms of biological role, decomposes hydrogen peroxide into water and oxygen; serves to protect cells from the toxic effects of hydrogen peroxide. The protein is Catalase HPII (katE) of Pseudomonas putida (Arthrobacter siderocapsulatus).